The chain runs to 211 residues: Mitotic spindle assembly checkpoint protein MAD2B (211 aa).

The region spanning 13-203 (QVVADILCEF…SDILKMQLYV (191 aa)) is the HORMA domain.

In terms of assembly, homooligomer. Interacts with rev1. Interacts with rev3l. Interacts with fzr1 (in complex with the anaphase promoting complex APC). May interact with cdc20.

Its subcellular location is the nucleus. The protein localises to the cytoplasm. The protein resides in the cytoskeleton. It is found in the spindle. In terms of biological role, adapter protein able to interact with different proteins and involved in different biological processes. Mediates the interaction between the error-prone DNA polymerase zeta catalytic subunit rev3l and the inserter polymerase rev1, thereby mediating the second polymerase switching in translesion DNA synthesis. Translesion DNA synthesis releases the replication blockade of replicative polymerases, stalled in presence of DNA lesions. May also play a role in signal transduction in response to DNA damage. May regulate the activation of the anaphase promoting complex APC thereby regulating progression through the cell cycle. Through transcriptional regulation may play a role in epithelial-mesenchymal transdifferentiation. This is Mitotic spindle assembly checkpoint protein MAD2B (mad2l2) from Xenopus tropicalis (Western clawed frog).